The following is a 578-amino-acid chain: Acyl-coenzyme A synthetase ACSM5, mitochondrial (578 aa).

Residues 1 to 22 constitute a mitochondrion transit peptide; it reads MRLWLRGLACQALRSSWGVCRI. K96 carries the N6-acetyllysine; alternate modification. An N6-succinyllysine; alternate modification is found at K96. Position 151 is an N6-acetyllysine (K151). 229 to 237 contacts ATP; the sequence is TSGTTGAPK. K302 is modified (N6-acetyllysine; alternate). N6-succinyllysine; alternate is present on K302. Position 335 is an N6-acetyllysine (K335). ATP is bound by residues 367–372, D454, R469, and K565; that span reads EGYGQS.

It belongs to the ATP-dependent AMP-binding enzyme family. Mg(2+) serves as cofactor. The cofactor is Mn(2+).

The protein resides in the mitochondrion matrix. The enzyme catalyses a medium-chain fatty acid + ATP + CoA = a medium-chain fatty acyl-CoA + AMP + diphosphate. In terms of biological role, catalyzes the activation of fatty acids by CoA to produce an acyl-CoA, the first step in fatty acid metabolism. In Mus musculus (Mouse), this protein is Acyl-coenzyme A synthetase ACSM5, mitochondrial (Acsm5).